The chain runs to 215 residues: Serine acetyltransferase (215 aa).

The protein belongs to the transferase hexapeptide repeat family.

The protein resides in the cytoplasm. It carries out the reaction L-serine + acetyl-CoA = O-acetyl-L-serine + CoA. Its pathway is amino-acid biosynthesis; L-cysteine biosynthesis; L-cysteine from L-serine: step 1/2. The protein is Serine acetyltransferase (cysE) of Staphylococcus aureus (strain MRSA252).